Consider the following 766-residue polypeptide: NADH-dependent flavin oxidoreductase iliE (766 aa).

The segment covering 1-13 has biased composition (polar residues); that stretch reads MSEQLGSHITTPS. The segment at 1–24 is disordered; the sequence is MSEQLGSHITTPSSHDDASKDKRP. The segment covering 14-24 has biased composition (basic and acidic residues); it reads SHDDASKDKRP. Asn-30 carries an N-linked (GlcNAc...) asparagine glycan. FMN is bound at residue 61 to 64; sequence AATA. Asn-70 and Asn-136 each carry an N-linked (GlcNAc...) asparagine glycan. Gln-143 is an FMN binding site. 224–227 serves as a coordination point for substrate; sequence HAGH. Residue 385–386 coordinates FMN; that stretch reads AR. The J domain maps to 551-622; that stretch reads TPYDILAMRK…SKRSLYDTQG (72 aa). N-linked (GlcNAc...) asparagine glycosylation is found at Asn-634, Asn-650, and Asn-654. Residues 675–695 form a helical membrane-spanning segment; the sequence is MYMSNGVFATLVVMMCMIGAF.

The protein belongs to the NADH:flavin oxidoreductase/NADH oxidase family.

Its subcellular location is the membrane. Functionally, NADH-dependent flavin oxidoreductase; part of the gene cluster that mediates the biosynthesis of ilicicolin H, a 4-hydroxy-2-pyridonealkaloid that has potent and broad antifungal activities by inhibiting the mitochondrial respiration chain. The biosynthesis of ilicicolin H starts with formation of the tetramic acid by the hybrid PKS-NRPS synthetase iliA with the partnering trans-enoyl reductase iliB since iliA lacks a designated enoylreductase (ER) domain. The cytochrome P450 monooxygenase iliC then catalyzes the ring expansion of the tetramate to the acyclic 2-pyridone. The pericyclase iliD further converts the acyclic 2-pyridone into 8-epi-ilicicolin H. 8-epi-ilicicolin H might then spontaneously convert to ilicicolin H since ilicicolin H is produced in the absence of the epimerase iliE, in contrast to what was observed for the Talaromyces variabilis ilicolin H biosynthetic pathway. This chain is NADH-dependent flavin oxidoreductase iliE, found in Neonectria sp. (strain DH2).